The chain runs to 280 residues: 2,3,4,5-tetrahydropyridine-2,6-dicarboxylate N-succinyltransferase (280 aa).

It belongs to the transferase hexapeptide repeat family.

Its subcellular location is the cytoplasm. The catalysed reaction is (S)-2,3,4,5-tetrahydrodipicolinate + succinyl-CoA + H2O = (S)-2-succinylamino-6-oxoheptanedioate + CoA. The protein operates within amino-acid biosynthesis; L-lysine biosynthesis via DAP pathway; LL-2,6-diaminopimelate from (S)-tetrahydrodipicolinate (succinylase route): step 1/3. This chain is 2,3,4,5-tetrahydropyridine-2,6-dicarboxylate N-succinyltransferase, found in Methylorubrum populi (strain ATCC BAA-705 / NCIMB 13946 / BJ001) (Methylobacterium populi).